A 250-amino-acid polypeptide reads, in one-letter code: Osmotin-like protein OSML15 (250 aa).

The signal sequence occupies residues 1-21; that stretch reads MSHLTTCLVFFLLAFVTYTNA. Disulfide bonds link Cys-31-Cys-226, Cys-73-Cys-83, Cys-88-Cys-94, Cys-142-Cys-214, Cys-147-Cys-197, Cys-155-Cys-165, Cys-169-Cys-178, and Cys-179-Cys-184.

Belongs to the thaumatin family.

This is Osmotin-like protein OSML15 from Solanum commersonii (Commerson's wild potato).